The primary structure comprises 185 residues: Elongation factor P (185 aa).

Belongs to the elongation factor P family.

Its subcellular location is the cytoplasm. Its pathway is protein biosynthesis; polypeptide chain elongation. Its function is as follows. Involved in peptide bond synthesis. Stimulates efficient translation and peptide-bond synthesis on native or reconstituted 70S ribosomes in vitro. Probably functions indirectly by altering the affinity of the ribosome for aminoacyl-tRNA, thus increasing their reactivity as acceptors for peptidyl transferase. The protein is Elongation factor P of Desulforudis audaxviator (strain MP104C).